We begin with the raw amino-acid sequence, 89 residues long: RNA-binding protein Hfq (89 aa).

Positions 9 to 68 constitute a Sm domain; that stretch reads EPFLNALRKEKVPVSIYLVNGIKLQGQIESFDQFVILLRNNVNQMVYKHAISTVVPARNV. The tract at residues 70-89 is disordered; it reads TAPPVPTETHAQSSEEFGNI. The span at 78–89 shows a compositional bias: polar residues; sequence THAQSSEEFGNI.

The protein belongs to the Hfq family. As to quaternary structure, homohexamer.

In terms of biological role, RNA chaperone that binds small regulatory RNA (sRNAs) and mRNAs to facilitate mRNA translational regulation in response to envelope stress, environmental stress and changes in metabolite concentrations. Also binds with high specificity to tRNAs. This is RNA-binding protein Hfq from Alkalilimnicola ehrlichii (strain ATCC BAA-1101 / DSM 17681 / MLHE-1).